Here is a 251-residue protein sequence, read N- to C-terminus: Methylthioribulose-1-phosphate dehydratase (251 aa).

Residues 1 to 26 (MTSVCDATNEDKENGSESTESQDKEH) are disordered. Residues 9-26 (NEDKENGSESTESQDKEH) are compositionally biased toward basic and acidic residues. Cys-100 contributes to the substrate binding site. Zn(2+) is bound by residues His-118 and His-120. Glu-142 functions as the Proton donor/acceptor in the catalytic mechanism. Position 198 (His-198) interacts with Zn(2+). A disordered region spans residues 232-251 (MDPSAPPIEENHYYDVQQSQ).

The protein belongs to the aldolase class II family. MtnB subfamily. Zn(2+) serves as cofactor.

It is found in the cytoplasm. The catalysed reaction is 5-(methylsulfanyl)-D-ribulose 1-phosphate = 5-methylsulfanyl-2,3-dioxopentyl phosphate + H2O. The protein operates within amino-acid biosynthesis; L-methionine biosynthesis via salvage pathway; L-methionine from S-methyl-5-thio-alpha-D-ribose 1-phosphate: step 2/6. In terms of biological role, catalyzes the dehydration of methylthioribulose-1-phosphate (MTRu-1-P) into 2,3-diketo-5-methylthiopentyl-1-phosphate (DK-MTP-1-P). Functions in the methionine salvage pathway. May play a role in apoptosis. The sequence is that of Methylthioribulose-1-phosphate dehydratase from Salmo salar (Atlantic salmon).